Here is a 431-residue protein sequence, read N- to C-terminus: FAD-dependent monooxygenase nodY1 (431 aa).

Residues 1–21 (MASTGVSVIVVGLGLAGLTTA) form the signal peptide. Glu-35 and Arg-110 together coordinate FAD. Arg-188 is a catalytic residue. Asp-313 lines the FAD pocket.

Belongs to the paxM FAD-dependent monooxygenase family. FAD is required as a cofactor.

It functions in the pathway secondary metabolite biosynthesis. FAD-dependent monooxygenase; part of the gene cluster that mediates the biosynthesis of the indole diterpenes nodulisporic acids (NA). Nodulisporic acid A (NAA) and its chemically modified derivatives are of particular significance because of their highly potent insecticidal activity against blood-feeding arthropods and lack of observable adverse effects on mammals, in particular the tremogenicity associated with the paspaline-derived IDTs is not observed. The geranylgeranyl diphosphate (GGPP) synthase ggs1, localized outside of the cluster, is proposed to catalyze the first step in nodulisporic acid biosynthesis via conversion of farnesyl pyrophosphate and isopentyl pyrophosphate into geranylgeranyl pyrophosphate (GGPP). Condensation of indole-3-glycerol phosphate with GGPP by the prenyl transferase nodC then forms 3-geranylgeranylindole (3-GGI). Epoxidation by the FAD-dependent monooxygenase nodM leads to a single-epoxidized-GGI that is substrate of the terpene cyclase nodB for cyclization to yield emindole SB. The terminal methyl carbon, C28, of emindole SB is then oxidized by the cytochrome P450 monooxygenase nodW to produce nodulisporic acid F (NAF), the pentacyclic core of NAA. NAF is converted to nodulisporic acid E (NAE) via prenylation. This step is probably performed by one of the indole diterpene prenyltransferases nodD1 or nodD2. Several oxidation steps performed by the FAD-linked oxidoreductase nodO and one of the cytochrome P450 monooxygenase nodR, nodX or nodZ further convert NAE to nodulisporic acid D (NAD). NAD is substrate of cytochrome P450 monooxygenase nodJ to produce the precursor of nodulisporic acid C (NAC), converted to NAC by one of the indole diterpene prenyltransferases nodD1 or nodD2. The FAD-dependent monooxygenase nodY2 then oxidizes NAC to nodulisporic acid B (NAB). Finally NAB is converted to NAA by one of the cytochrome P450 monooxygenases nodR, nodX or nodZ. The polypeptide is FAD-dependent monooxygenase nodY1 (Hypoxylon pulicicidum).